Here is a 214-residue protein sequence, read N- to C-terminus: 3-isopropylmalate dehydratase small subunit (214 aa).

It belongs to the LeuD family. LeuD type 1 subfamily. In terms of assembly, heterodimer of LeuC and LeuD.

It catalyses the reaction (2R,3S)-3-isopropylmalate = (2S)-2-isopropylmalate. Its pathway is amino-acid biosynthesis; L-leucine biosynthesis; L-leucine from 3-methyl-2-oxobutanoate: step 2/4. Catalyzes the isomerization between 2-isopropylmalate and 3-isopropylmalate, via the formation of 2-isopropylmaleate. In Alcanivorax borkumensis (strain ATCC 700651 / DSM 11573 / NCIMB 13689 / SK2), this protein is 3-isopropylmalate dehydratase small subunit.